Reading from the N-terminus, the 597-residue chain is Elongation factor 4 (597 aa).

In terms of domain architecture, tr-type G spans 2 to 184; it reads KNIRNFSIIA…EIVAKIPAPT (183 aa). GTP-binding positions include 14–19 and 131–134; these read DHGKST and NKID.

This sequence belongs to the TRAFAC class translation factor GTPase superfamily. Classic translation factor GTPase family. LepA subfamily.

The protein localises to the cell inner membrane. The catalysed reaction is GTP + H2O = GDP + phosphate + H(+). Required for accurate and efficient protein synthesis under certain stress conditions. May act as a fidelity factor of the translation reaction, by catalyzing a one-codon backward translocation of tRNAs on improperly translocated ribosomes. Back-translocation proceeds from a post-translocation (POST) complex to a pre-translocation (PRE) complex, thus giving elongation factor G a second chance to translocate the tRNAs correctly. Binds to ribosomes in a GTP-dependent manner. This chain is Elongation factor 4, found in Neisseria meningitidis serogroup C / serotype 2a (strain ATCC 700532 / DSM 15464 / FAM18).